A 275-amino-acid chain; its full sequence is Phosphonoacetaldehyde hydrolase (275 aa).

The active-site Nucleophile is the aspartate 15. Aspartate 15 and alanine 17 together coordinate Mg(2+). Lysine 56 serves as the catalytic Schiff-base intermediate with substrate. Aspartate 189 contributes to the Mg(2+) binding site.

It belongs to the HAD-like hydrolase superfamily. PhnX family. In terms of assembly, homodimer. It depends on Mg(2+) as a cofactor.

It catalyses the reaction phosphonoacetaldehyde + H2O = acetaldehyde + phosphate + H(+). In terms of biological role, involved in phosphonate degradation. This is Phosphonoacetaldehyde hydrolase from Pseudomonas putida (strain ATCC 700007 / DSM 6899 / JCM 31910 / BCRC 17059 / LMG 24140 / F1).